A 382-amino-acid polypeptide reads, in one-letter code: UDP-N-acetylglucosamine--N-acetylmuramyl-(pentapeptide) pyrophosphoryl-undecaprenol N-acetylglucosamine transferase (382 aa).

UDP-N-acetyl-alpha-D-glucosamine contacts are provided by residues 17–19, Asn-137, Arg-179, Ser-213, and Gln-308; that span reads TAG.

The protein belongs to the glycosyltransferase 28 family. MurG subfamily.

The protein resides in the cell membrane. It catalyses the reaction di-trans,octa-cis-undecaprenyl diphospho-N-acetyl-alpha-D-muramoyl-L-alanyl-D-glutamyl-meso-2,6-diaminopimeloyl-D-alanyl-D-alanine + UDP-N-acetyl-alpha-D-glucosamine = di-trans,octa-cis-undecaprenyl diphospho-[N-acetyl-alpha-D-glucosaminyl-(1-&gt;4)]-N-acetyl-alpha-D-muramoyl-L-alanyl-D-glutamyl-meso-2,6-diaminopimeloyl-D-alanyl-D-alanine + UDP + H(+). It functions in the pathway cell wall biogenesis; peptidoglycan biosynthesis. Cell wall formation. Catalyzes the transfer of a GlcNAc subunit on undecaprenyl-pyrophosphoryl-MurNAc-pentapeptide (lipid intermediate I) to form undecaprenyl-pyrophosphoryl-MurNAc-(pentapeptide)GlcNAc (lipid intermediate II). This chain is UDP-N-acetylglucosamine--N-acetylmuramyl-(pentapeptide) pyrophosphoryl-undecaprenol N-acetylglucosamine transferase, found in Rhodococcus jostii (strain RHA1).